Here is a 312-residue protein sequence, read N- to C-terminus: Pantothenate kinase (312 aa).

ATP is bound at residue glycine 97–serine 104.

Belongs to the prokaryotic pantothenate kinase family.

The protein localises to the cytoplasm. The enzyme catalyses (R)-pantothenate + ATP = (R)-4'-phosphopantothenate + ADP + H(+). It participates in cofactor biosynthesis; coenzyme A biosynthesis; CoA from (R)-pantothenate: step 1/5. This is Pantothenate kinase from Mycolicibacterium vanbaalenii (strain DSM 7251 / JCM 13017 / BCRC 16820 / KCTC 9966 / NRRL B-24157 / PYR-1) (Mycobacterium vanbaalenii).